We begin with the raw amino-acid sequence, 485 residues long: Trigger factor (485 aa).

A PPIase FKBP-type domain is found at 169-261; sequence GDVAIVDFVG…LKELKEKELP (93 aa).

The protein belongs to the FKBP-type PPIase family. Tig subfamily.

It localises to the cytoplasm. It carries out the reaction [protein]-peptidylproline (omega=180) = [protein]-peptidylproline (omega=0). Its function is as follows. Involved in protein export. Acts as a chaperone by maintaining the newly synthesized protein in an open conformation. Functions as a peptidyl-prolyl cis-trans isomerase. This Trichodesmium erythraeum (strain IMS101) protein is Trigger factor.